A 341-amino-acid polypeptide reads, in one-letter code: Cell division protein FtsQ (341 aa).

Residues 1-126 (MTETDEGAPV…VARGVVRGLK (126 aa)) lie on the Cytoplasmic side of the membrane. Residues 127-147 (TLFATVMFSIAGFGLGLALYV) form a helical membrane-spanning segment. Topologically, residues 148 to 341 (TPAMSVRNIV…VSSPDLPTVK (194 aa)) are extracellular. The region spanning 151-219 (MSVRNIVVTG…SALRITIVER (69 aa)) is the POTRA domain.

It belongs to the FtsQ/DivIB family. FtsQ subfamily.

The protein resides in the cell membrane. Its function is as follows. Essential cell division protein. This is Cell division protein FtsQ from Mycobacterium leprae (strain Br4923).